A 152-amino-acid chain; its full sequence is Erythema protein SVEP (152 aa).

A signal peptide spans 1 to 18; that stretch reads MSITQSFFVLTLAIFGAA.

Salivary gland (at protein level).

It localises to the secreted. In terms of biological role, salivary vasoactive peptide; induces vasodilatation in bioassay with rabbit aortic rings. This Simulium vittatum (Striped black fly) protein is Erythema protein SVEP.